The sequence spans 224 residues: Coiled-coil domain-containing protein 43 (224 aa).

Residue Lys95 forms a Glycyl lysine isopeptide (Lys-Gly) (interchain with G-Cter in SUMO1) linkage. Coiled coils occupy residues 121–145 and 177–218; these read SEEEKQRKAALLAQYADVTDEEDEA and RKLE…KRTQ. The segment covering 138–149 has biased composition (acidic residues); that stretch reads VTDEEDEADEKD. 2 disordered regions span residues 138 to 157 and 176 to 224; these read VTDEEDEADEKDDSGATTMN and ARKL…ERKR. Thr139 bears the Phosphothreonine mark. The span at 176-211 shows a compositional bias: basic and acidic residues; that stretch reads ARKLERDSLRDESQRKKEQDKLQRERDKLAKQERKE. Positions 212–224 are enriched in basic residues; sequence KEKKRTQRGERKR.

This sequence belongs to the CCDC43 family.

The sequence is that of Coiled-coil domain-containing protein 43 (CCDC43) from Homo sapiens (Human).